Consider the following 595-residue polypeptide: Elongation factor 4 (595 aa).

Positions 2–183 (KNIRNFCIIA…AIVEQVPAPA (182 aa)) constitute a tr-type G domain. GTP contacts are provided by residues 14–19 (DHGKST) and 130–133 (NKVD).

Belongs to the TRAFAC class translation factor GTPase superfamily. Classic translation factor GTPase family. LepA subfamily.

The protein resides in the cell inner membrane. It carries out the reaction GTP + H2O = GDP + phosphate + H(+). Required for accurate and efficient protein synthesis under certain stress conditions. May act as a fidelity factor of the translation reaction, by catalyzing a one-codon backward translocation of tRNAs on improperly translocated ribosomes. Back-translocation proceeds from a post-translocation (POST) complex to a pre-translocation (PRE) complex, thus giving elongation factor G a second chance to translocate the tRNAs correctly. Binds to ribosomes in a GTP-dependent manner. The sequence is that of Elongation factor 4 from Porphyromonas gingivalis (strain ATCC 33277 / DSM 20709 / CIP 103683 / JCM 12257 / NCTC 11834 / 2561).